Here is a 445-residue protein sequence, read N- to C-terminus: Phosphoglucosamine mutase (445 aa).

Ser-102 (phosphoserine intermediate) is an active-site residue. 4 residues coordinate Mg(2+): Ser-102, Asp-241, Asp-243, and Asp-245. Ser-102 carries the post-translational modification Phosphoserine.

Belongs to the phosphohexose mutase family. Mg(2+) is required as a cofactor. Post-translationally, activated by phosphorylation.

The catalysed reaction is alpha-D-glucosamine 1-phosphate = D-glucosamine 6-phosphate. Functionally, catalyzes the conversion of glucosamine-6-phosphate to glucosamine-1-phosphate. The polypeptide is Phosphoglucosamine mutase (Escherichia coli O157:H7).